The primary structure comprises 552 residues: Cleavage and polyadenylation specificity factor subunit 6 (552 aa).

Residues 1–213 (MADGVDHIDI…RGRFPGAVPG (213 aa)) form a necessary for interaction with NXF1 region. One can recognise an RRM domain in the interval 81–161 (IALYIGNLTR…QNPVVTPCNK (81 aa)). The interval 81-161 (IALYIGNLTR…QNPVVTPCNK (81 aa)) is necessary for interaction with NUDT21/CPSF5. The necessary for nuclear paraspeckles localization stretch occupies residues 81 to 161 (IALYIGNLTR…QNPVVTPCNK (81 aa)). Threonine 157 carries the post-translational modification Phosphothreonine. Residues 169–180 (MQSRKTTQSGQM) show a composition bias toward polar residues. Disordered regions lie at residues 169-411 (MQSR…PLSE) and 479-552 (GIES…YRHR). Residues 202–206 (RGRGR) carry the GAR motif. Over residues 207–219 (FPGAVPGGDRFPG) the composition is skewed to low complexity. 3 stretches are compositionally biased toward pro residues: residues 220-265 (PTGP…PLAG), 285-366 (GQPP…PPPT), and 377-388 (GPPPTDPYGRPP). Positions 389 to 404 (PYDRGDYGPPGREMDT) are enriched in basic and acidic residues. Phosphothreonine occurs at positions 404 and 407. Positions 404-552 (TARTPLSEAE…RDREREYRHR (149 aa)) are sufficient for nuclear speckle localization. The interval 405 to 552 (ARTPLSEAEF…RDREREYRHR (148 aa)) is necessary for RNA-binding. The necessary for interaction with SRSF3, SRSF7 and TRA2B/SFRS10 stretch occupies residues 481 to 552 (ESKSYGSGSR…RDREREYRHR (72 aa)). Positions 491-552 (RRERSRERDH…RDREREYRHR (62 aa)) are arg/Ser-rich domain. The segment covering 494 to 504 (RSRERDHSRSR) has biased composition (basic and acidic residues). Residues serine 495, serine 501, serine 512, serine 514, and serine 526 each carry the phosphoserine modification. Basic residues predominate over residues 505–515 (EKSRRHKSRSR). The sufficient for nuclear targeting stretch occupies residues 511-552 (KSRSRDRHDDYYRERSRERERHRDRDRDRDRERDREREYRHR). The span at 516-552 (DRHDDYYRERSRERERHRDRDRDRDRERDREREYRHR) shows a compositional bias: basic and acidic residues.

Belongs to the RRM CPSF6/7 family. In terms of assembly, component of the cleavage factor Im (CFIm) complex which is a heterotetramer composed of two subunits of NUDT21/CPSF5 and two subunits of CPSF6 or CPSF7 or a heterodimer of CPSF6 and CPSF7. The cleavage factor Im (CFIm) complex associates with the CPSF and CSTF complexes to promote the assembly of the core mRNA 3'-processing machinery. Associates with the exon junction complex (EJC). Associates with the 80S ribosome particle. Interacts (via the RRM domain) with NUDT21/CPSF5; this interaction is direct and enhances binding to RNA. Interacts (via Arg/Ser-rich domain) with FIP1L1 (preferentially via unphosphorylated form and Arg/Glu/Asp-rich domain); this interaction mediates, at least in part, the interaction between the CFIm and CPSF complexes and may be inhibited by CPSF6 hyper-phosphorylation. Interacts (via N-terminus) with NXF1; this interaction is direct. Interacts with SRSF3. Interacts with SRSF7. Interacts with SNRNP70. Interacts with TRA2B/SFRS10. Interacts with UPF1. Interacts with UPF3B. Interacts with VIRMA. Interacts (via Arg/Ser-rich domain) with TNPO3; promoting nuclear import of CPSF6 independently of its phosphorylation status. Interacts with YTHDC1. In terms of processing, phosphorylated. Phosphorylated in the Arg/Ser-rich domain by SRPK1, in vitro. Post-translationally, symmetrically dimethylated on arginine residues in the GAR motif by PRMT5 in a WDR77- and CLNS1A-dependent manner. Asymmetrically dimethylated on arginine residues in the GAR motif by PRMT1.

It localises to the nucleus. Its subcellular location is the nucleoplasm. It is found in the nucleus speckle. The protein localises to the cytoplasm. Component of the cleavage factor Im (CFIm) complex that functions as an activator of the pre-mRNA 3'-end cleavage and polyadenylation processing required for the maturation of pre-mRNA into functional mRNAs. CFIm contributes to the recruitment of multiprotein complexes on specific sequences on the pre-mRNA 3'-end, so called cleavage and polyadenylation signals (pA signals). Most pre-mRNAs contain multiple pA signals, resulting in alternative cleavage and polyadenylation (APA) producing mRNAs with variable 3'-end formation. The CFIm complex acts as a key regulator of cleavage and polyadenylation site choice during APA through its binding to 5'-UGUA-3' elements localized in the 3'-untranslated region (UTR) for a huge number of pre-mRNAs. CPSF6 enhances NUDT21/CPSF5 binding to 5'-UGUA-3' elements localized upstream of pA signals and promotes RNA looping, and hence activates directly the mRNA 3'-processing machinery. Plays a role in mRNA export. This chain is Cleavage and polyadenylation specificity factor subunit 6, found in Pongo abelii (Sumatran orangutan).